The primary structure comprises 303 residues: 2-dehydropantoate 2-reductase (303 aa).

Residues 7–12, Asn98, and Ala122 contribute to the NADP(+) site; that span reads GCGALG. Asn98 contributes to the substrate binding site. Lys176 acts as the Proton donor in catalysis. Substrate-binding residues include Asn180, Asn184, Asn194, and Ser244. An NADP(+)-binding site is contributed by Glu256.

This sequence belongs to the ketopantoate reductase family.

The protein resides in the cytoplasm. It catalyses the reaction (R)-pantoate + NADP(+) = 2-dehydropantoate + NADPH + H(+). Its pathway is cofactor biosynthesis; (R)-pantothenate biosynthesis; (R)-pantoate from 3-methyl-2-oxobutanoate: step 2/2. Catalyzes the NADPH-dependent reduction of ketopantoate into pantoic acid. The polypeptide is 2-dehydropantoate 2-reductase (panE) (Yersinia pestis).